A 445-amino-acid polypeptide reads, in one-letter code: NAD(P)H coenzyme A polysulfide/persulfide reductase (445 aa).

16–17 (AA) lines the FAD pocket. Residue Arg27 coordinates CoA. FAD is bound by residues 38–39 (EA) and 45–47 (HAP). CoA is bound by residues 44–48 (SHAPC), 65–66 (YY), and Arg75. The active-site Redox-active is Cys48. FAD contacts are provided by Val85, Asp283, and Ala301. CoA contacts are provided by Asn305 and Lys361. Tyr425 is a binding site for FAD. The CoA site is built by Trp433 and Arg441.

This sequence belongs to the class-III pyridine nucleotide-disulfide oxidoreductase family. In terms of assembly, homodimer. Homotetramer. The cofactor is FAD.

The catalysed reaction is NADP(+) + 2 CoA = CoA-disulfide + NADPH + H(+). It carries out the reaction NAD(+) + 2 CoA = CoA-disulfide + NADH + H(+). Functionally, catalyzes the NAD(P)H-dependent reduction of polysulfide, CoA-polysulfides, and CoA persulfide, as well as the reduction of a range of other small persulfides, including TNB and glutathione persulfides. The likely in vivo substrates are di-, poly-, and persulfide derivatives of coenzyme A, although polysulfide itself is also efficiently reduced. Shows coenzyme A disulfide reductase (CoADR) activity with both NADH and NADPH, with a preference for NADPH. May also play a role in the reduction of elemental sulfur. This chain is NAD(P)H coenzyme A polysulfide/persulfide reductase, found in Pyrococcus horikoshii (strain ATCC 700860 / DSM 12428 / JCM 9974 / NBRC 100139 / OT-3).